A 234-amino-acid chain; its full sequence is Purine nucleoside phosphorylase DeoD-type (234 aa).

H4 contacts a purine D-ribonucleoside. Phosphate contacts are provided by residues G20, R24, R43, and 87–90 (RIGS). Residues 179 to 181 (DME) and 203 to 204 (SD) contribute to the a purine D-ribonucleoside site. The Proton donor role is filled by D204.

Belongs to the PNP/UDP phosphorylase family. Homohexamer; trimer of homodimers.

It catalyses the reaction a purine D-ribonucleoside + phosphate = a purine nucleobase + alpha-D-ribose 1-phosphate. The catalysed reaction is a purine 2'-deoxy-D-ribonucleoside + phosphate = a purine nucleobase + 2-deoxy-alpha-D-ribose 1-phosphate. Its function is as follows. Catalyzes the reversible phosphorolytic breakdown of the N-glycosidic bond in the beta-(deoxy)ribonucleoside molecules, with the formation of the corresponding free purine bases and pentose-1-phosphate. The polypeptide is Purine nucleoside phosphorylase DeoD-type (Shewanella oneidensis (strain ATCC 700550 / JCM 31522 / CIP 106686 / LMG 19005 / NCIMB 14063 / MR-1)).